Consider the following 151-residue polypeptide: Sec-independent protein translocase protein TatB (151 aa).

A helical transmembrane segment spans residues 1–21 (MFGMSLPEIIIIAVIAVIFLG). Residues 120–131 (NNDPLNNETLNE) are compositionally biased toward low complexity. The disordered stretch occupies residues 120–151 (NNDPLNNETLNEQPSKPSPNLNLENKEIKKEA). Residues 132 to 142 (QPSKPSPNLNL) are compositionally biased toward polar residues.

Belongs to the TatB family. The Tat system comprises two distinct complexes: a TatABC complex, containing multiple copies of TatA, TatB and TatC subunits, and a separate TatA complex, containing only TatA subunits. Substrates initially bind to the TatABC complex, which probably triggers association of the separate TatA complex to form the active translocon.

Its subcellular location is the cell inner membrane. In terms of biological role, part of the twin-arginine translocation (Tat) system that transports large folded proteins containing a characteristic twin-arginine motif in their signal peptide across membranes. Together with TatC, TatB is part of a receptor directly interacting with Tat signal peptides. TatB may form an oligomeric binding site that transiently accommodates folded Tat precursor proteins before their translocation. The protein is Sec-independent protein translocase protein TatB of Campylobacter fetus subsp. fetus (strain 82-40).